Here is a 184-residue protein sequence, read N- to C-terminus: Elongation factor P (184 aa).

The protein belongs to the elongation factor P family.

The protein resides in the cytoplasm. Its pathway is protein biosynthesis; polypeptide chain elongation. Its function is as follows. Involved in peptide bond synthesis. Stimulates efficient translation and peptide-bond synthesis on native or reconstituted 70S ribosomes in vitro. Probably functions indirectly by altering the affinity of the ribosome for aminoacyl-tRNA, thus increasing their reactivity as acceptors for peptidyl transferase. The polypeptide is Elongation factor P (Acidovorax ebreus (strain TPSY) (Diaphorobacter sp. (strain TPSY))).